Consider the following 501-residue polypeptide: MAQVINTNSLSLLTQNNLNKSQSALGTAIERLSSGLRINSAKDDAAGQAIANRFTANIKGLTQASRNANDGISIAQTTEGALNEINNNLQRVRELAVQSANSTNSQSDLDSIQAEITQRLNEIDRVSGQTQFNGVKVLAQDNTLTIQVGANDGETIDIDLKQINSQTLGLDTLNVQKKYDVSDTAVAASYSDSKQNIAVPDKTAITAKIGAATSGGAGIKADISFKDGKYYATVSGYDDAADTDKNGTYEVTVAADTGAVTFATTPTVVDLPTDAKAVSKVQQNDTEIAATNAKAALKAAGVADAEADTATLVKMSYTDNNGKVIDGGFAFKTSGGYYAASVDKSGAASLKVTSYVDATTGTEKTAANKLGGADGKTEVVTIDGKTYNASKAAGHNFKAQPELAEAAATTTENPLQKIDAALAQVDALRSDLGAVQNRFNSAITNLGNTVNNLSSARSRIEDSDYATEVSNMSRAQILQQAGTSVLAQANQVPQNVLSLLR.

The protein belongs to the bacterial flagellin family.

The protein localises to the secreted. The protein resides in the bacterial flagellum. Its function is as follows. Flagellin is the subunit protein which polymerizes to form the filaments of bacterial flagella. This is Flagellin (fliC) from Salmonella choleraesuis (strain SC-B67).